A 535-amino-acid chain; its full sequence is Beta-glucosidase 47 (535 aa).

Positions 1 to 38 (MKKSIVYEIMETKSSMYLSQFRLWLCFIITTLVSLSSS) are cleaved as a signal peptide. A beta-D-glucoside is bound at residue Gln73. An N-linked (GlcNAc...) asparagine glycan is attached at Asn93. Residues His175 and 220 to 221 (NE) each bind a beta-D-glucoside. The active-site Proton donor is Glu221. Cys240 and Cys247 form a disulfide bridge. Asn246 carries an N-linked (GlcNAc...) asparagine glycan. Position 363 (Tyr363) interacts with a beta-D-glucoside. Cys371 and Cys376 are disulfide-bonded. Residue Asn419 is glycosylated (N-linked (GlcNAc...) asparagine). An a beta-D-glucoside-binding site is contributed by Glu426. Catalysis depends on Glu426, which acts as the Nucleophile. Asn432 carries an N-linked (GlcNAc...) asparagine glycan. A beta-D-glucoside-binding positions include Trp470, 477–478 (EW), and Phe486.

It belongs to the glycosyl hydrolase 1 family.

It carries out the reaction Hydrolysis of terminal, non-reducing beta-D-glucosyl residues with release of beta-D-glucose.. In Arabidopsis thaliana (Mouse-ear cress), this protein is Beta-glucosidase 47.